A 190-amino-acid chain; its full sequence is Casparian strip membrane protein 1 (190 aa).

Topologically, residues 1 to 24 (MKAESGSADAKLPLPPPVGRKRRG) are cytoplasmic. Residues 25–45 (LAILDFLLRLLAIGATLSAAI) form a helical membrane-spanning segment. At 46–72 (AMGTNNETLKFFTQFFQFNARFYNLSA) the chain is on the extracellular side. N-linked (GlcNAc...) asparagine glycosylation is found at N51 and N69. A helical transmembrane segment spans residues 73 to 93 (FIYFVIANATVGLYLLLSLPF). At 94-107 (SIFDIVRPRAAAFR) the chain is on the cytoplasmic side. The chain crosses the membrane as a helical span at residues 108–128 (VLLIFFDTVMVAVCTSGAAAA). Residues 129–157 (TAIMYVARRGNTKTNWFSICQQFNSFCDQ) are Extracellular-facing. The helical transmembrane segment at 158–178 (ATGALGASFAAVVLLILLVLL) threads the bilayer. At 179–190 (SASTLHRQRADF) the chain is on the cytoplasmic side.

Belongs to the Casparian strip membrane proteins (CASP) family. Homodimer and heterodimers.

The protein resides in the cell membrane. Functionally, regulates membrane-cell wall junctions and localized cell wall deposition. Required for establishment of the Casparian strip membrane domain (CSD) and the subsequent formation of Casparian strips, a cell wall modification of the root endodermis that determines an apoplastic barrier between the intraorganismal apoplasm and the extraorganismal apoplasm and prevents lateral diffusion. The polypeptide is Casparian strip membrane protein 1 (Pinus taeda (Loblolly pine)).